A 283-amino-acid chain; its full sequence is 4-diphosphocytidyl-2-C-methyl-D-erythritol kinase (283 aa).

Lys10 is an active-site residue. An ATP-binding site is contributed by 99–109 (PMGGGLGGGSS). The active site involves Asp141.

This sequence belongs to the GHMP kinase family. IspE subfamily. In terms of assembly, homodimer.

The catalysed reaction is 4-CDP-2-C-methyl-D-erythritol + ATP = 4-CDP-2-C-methyl-D-erythritol 2-phosphate + ADP + H(+). It functions in the pathway isoprenoid biosynthesis; isopentenyl diphosphate biosynthesis via DXP pathway; isopentenyl diphosphate from 1-deoxy-D-xylulose 5-phosphate: step 3/6. Catalyzes the phosphorylation of the position 2 hydroxy group of 4-diphosphocytidyl-2C-methyl-D-erythritol. This Salmonella gallinarum (strain 287/91 / NCTC 13346) protein is 4-diphosphocytidyl-2-C-methyl-D-erythritol kinase.